A 135-amino-acid chain; its full sequence is Histone H3 (135 aa).

The disordered stretch occupies residues 1–40; sequence MARTKQTARKSTGGKAPRKAVATKARKTAPPVGGVKKPHR. Residues 19–31 are compositionally biased toward low complexity; sequence KAVATKARKTAPP.

The protein belongs to the histone H3 family. In terms of assembly, the nucleosome is a histone octamer containing two molecules each of H2A, H2B, H3 and H4 assembled in one H3-H4 heterotetramer and two H2A-H2B heterodimers. The octamer wraps approximately 147 bp of DNA.

It localises to the nucleus. Its subcellular location is the chromosome. In terms of biological role, core component of nucleosome. Nucleosomes wrap and compact DNA into chromatin, limiting DNA accessibility to the cellular machineries which require DNA as a template. Histones thereby play a central role in transcription regulation, DNA repair, DNA replication and chromosomal stability. DNA accessibility is regulated via a complex set of post-translational modifications of histones, also called histone code, and nucleosome remodeling. The polypeptide is Histone H3 (Mastigamoeba balamuthi (Phreatamoeba balamuthi)).